Consider the following 346-residue polypeptide: tRNA N6-adenosine threonylcarbamoyltransferase (346 aa).

Positions 111 and 115 each coordinate Fe cation. Residues L134 to G138, D167, G180, and N279 contribute to the substrate site. A Fe cation-binding site is contributed by D307.

It belongs to the KAE1 / TsaD family. The cofactor is Fe(2+).

The protein resides in the cytoplasm. The enzyme catalyses L-threonylcarbamoyladenylate + adenosine(37) in tRNA = N(6)-L-threonylcarbamoyladenosine(37) in tRNA + AMP + H(+). Functionally, required for the formation of a threonylcarbamoyl group on adenosine at position 37 (t(6)A37) in tRNAs that read codons beginning with adenine. Is involved in the transfer of the threonylcarbamoyl moiety of threonylcarbamoyl-AMP (TC-AMP) to the N6 group of A37, together with TsaE and TsaB. TsaD likely plays a direct catalytic role in this reaction. This Burkholderia pseudomallei (strain 1106a) protein is tRNA N6-adenosine threonylcarbamoyltransferase.